The sequence spans 239 residues: Ribonuclease PH (239 aa).

Phosphate-binding positions include R86 and G124–R126.

This sequence belongs to the RNase PH family. As to quaternary structure, homohexameric ring arranged as a trimer of dimers.

It carries out the reaction tRNA(n+1) + phosphate = tRNA(n) + a ribonucleoside 5'-diphosphate. Its function is as follows. Phosphorolytic 3'-5' exoribonuclease that plays an important role in tRNA 3'-end maturation. Removes nucleotide residues following the 3'-CCA terminus of tRNAs; can also add nucleotides to the ends of RNA molecules by using nucleoside diphosphates as substrates, but this may not be physiologically important. Probably plays a role in initiation of 16S rRNA degradation (leading to ribosome degradation) during starvation. The polypeptide is Ribonuclease PH (Rickettsia africae (strain ESF-5)).